Here is a 158-residue protein sequence, read N- to C-terminus: NAD(P)H-quinone oxidoreductase subunit J, chloroplastic (158 aa).

This sequence belongs to the complex I 30 kDa subunit family. As to quaternary structure, NDH is composed of at least 16 different subunits, 5 of which are encoded in the nucleus.

It is found in the plastid. It localises to the chloroplast thylakoid membrane. It carries out the reaction a plastoquinone + NADH + (n+1) H(+)(in) = a plastoquinol + NAD(+) + n H(+)(out). The enzyme catalyses a plastoquinone + NADPH + (n+1) H(+)(in) = a plastoquinol + NADP(+) + n H(+)(out). Its function is as follows. NDH shuttles electrons from NAD(P)H:plastoquinone, via FMN and iron-sulfur (Fe-S) centers, to quinones in the photosynthetic chain and possibly in a chloroplast respiratory chain. The immediate electron acceptor for the enzyme in this species is believed to be plastoquinone. Couples the redox reaction to proton translocation, and thus conserves the redox energy in a proton gradient. The chain is NAD(P)H-quinone oxidoreductase subunit J, chloroplastic from Nicotiana tabacum (Common tobacco).